The primary structure comprises 456 residues: Armadillo repeat-containing X-linked protein 1 (456 aa).

At 1–6 the chain is on the mitochondrial intermembrane side; that stretch reads MGRTRE. 2 mitochondrion outer membrane (MOM)-targeting sequence regions span residues 1–6 and 26–36; these read MGRTRE and RLTWGKDENEK. A helical; Signal-anchor transmembrane segment spans residues 7–29; sequence AGCVAAGMVIGAGACYCVYRLTW. At 30–456 the chain is on the cytoplasmic side; it reads GKDENEKLWD…VKVLKVLTKL (427 aa). Disordered regions lie at residues 37–106 and 139–186; these read LWDE…SGGG and RTLT…APAT. Residues 38–50 show a composition bias toward acidic residues; it reads WDEEEEEEEEEEE. Basic and acidic residues-rich tracts occupy residues 51–62 and 72–81; these read KSCSDKTEKELK and KPQDDSKSKV. The span at 162 to 180 shows a compositional bias: basic residues; the sequence is SRARNRTSGKVKRKNRSKS. ARM repeat units lie at residues 198-238, 240-279, 361-401, and 418-456; these read PYKI…NNAA, SFNQ…NLSV, PAMT…NIND, and SSLF…LTKL.

It belongs to the eutherian X-chromosome-specific Armcx family. In terms of assembly, interacts with MIRO1. Widely expressed in the adult nervous tissue, especially in the forebrain, including the cerebral cortex, hippocampus and thalamus.

The protein localises to the mitochondrion. The protein resides in the mitochondrion outer membrane. Regulates mitochondrial transport during axon regeneration. Increases the proportion of motile mitochondria by recruiting stationary mitochondria into the motile pool. Enhances mitochondria movement and neurite growth in both adult axons and embryonic neurons. Promotes neuronal survival and axon regeneration after nerve injury. May link mitochondria to the Trak1-kinesin motor complex via its interaction with Miro1. The sequence is that of Armadillo repeat-containing X-linked protein 1 (Armcx1) from Mus musculus (Mouse).